We begin with the raw amino-acid sequence, 837 residues long: MASKRKSTTPCMVRTSQVVEQDVPEEVDRAKEKGIGTPQPDVAKDCWAAELENSSKENEVIEVKSMGESQSKKLQGGYECKYCPYSTQNLNEFTEHVDMQHPNVILNPLYVCAECNFTTKKYDSLSDHNSKFHPGEANFKLKLIKRNNQTVLEQSIEATNHVVSITTSGPGTGDSDSGISVSKTPIMKPGKPKADAKKVPKKPEEIAPENHVEGTARLVTDTAEILSRLGGVELLQDTLGHVMPSVQLPPNINLVPKVPVPLNTTKYNSALDTNATMINSFNKFPYPTQAELSWLTAASKHPEEHIRIWFATQRLKHGISWSPEEVEEARKKMFNGTIQSVPPTITVLPAQLAPTKVTQPILQTALPCQILGQTSLVLTPVTSGSTTVSCSPITLAVAGVTNHGQKRPLVTPQAAPEPKRPHIAQVPEPPPKVANPPLTPASDRKKTKEQIAHLKASFLQSQFPDDAEVYRLIEVTGLARSEIKKWFSDHRYRCQRGIVHITSGSLAKEQLAIAASRHGRTYHAYPDFAPQKFKEKTQGQVKILEDSFLKSSFPTQAELDRLRVETKLSRREIDSWFSERRKLRDSMEQAVLDSMGSGKKGQDVGAPNGALSRLDQLSGAQLTSSLPSPSPAIAKSQEQVHLLRSTFARTQWPTPQEYDQLAAKTGLVRTEIVRWFKENRCLLKTGTVKWMEQYQHQPVADDHGYDAVARKATKPMAESPKNGGDMVPQYYKDPKKLCEEDLEKLVPRVKVGSEPAKDCLPAKPSEATSDRSEGSSRDGQGSDENEESSVVDYVEVTVGEEDAISDRSDSWSQAAAEGVAELAESDSDCVPAEAGQA.

The segment at 1-41 (MASKRKSTTPCMVRTSQVVEQDVPEEVDRAKEKGIGTPQPD) is disordered. An interaction with EFNB1 region spans residues 27–77 (VDRAKEKGIGTPQPDVAKDCWAAELENSSKENEVIEVKSMGESQSKKLQGG). Threonine 37 carries the phosphothreonine modification. Lysine 64 is covalently cross-linked (Glycyl lysine isopeptide (Lys-Gly) (interchain with G-Cter in SUMO2)). C2H2-type zinc fingers lie at residues 78–101 (YECK…DMQH) and 110–133 (YVCA…SKFH). Over residues 167–180 (TSGPGTGDSDSGIS) the composition is skewed to low complexity. The disordered stretch occupies residues 167–203 (TSGPGTGDSDSGISVSKTPIMKPGKPKADAKKVPKKP). Residues 192-203 (PKADAKKVPKKP) show a composition bias toward basic and acidic residues. A required for homodimerization region spans residues 195–358 (DAKKVPKKPE…PAQLAPTKVT (164 aa)). 4 DNA-binding regions (homeobox) span residues 263–324 (NTTK…WSPE), 439–501 (TPAS…IVHI), 530–591 (PQKF…EQAV), and 628–690 (SPSP…TVKW). The segment at 263-446 (NTTKYNSALD…PLTPASDRKK (184 aa)) is required for repressor activity. The segment at 263–497 (NTTKYNSALD…SDHRYRCQRG (235 aa)) is required for interaction with NFYA. The segment at 317-446 (HGISWSPEEV…PLTPASDRKK (130 aa)) is required for nuclear localization. The segment at 404–445 (GQKRPLVTPQAAPEPKRPHIAQVPEPPPKVANPPLTPASDRK) is disordered. Pro residues predominate over residues 427 to 439 (PEPPPKVANPPLT). Lysine 455 is covalently cross-linked (Glycyl lysine isopeptide (Lys-Gly) (interchain with G-Cter in SUMO2)). The tract at residues 754 to 837 (EPAKDCLPAK…DCVPAEAGQA (84 aa)) is disordered. 2 positions are modified to phosphoserine: serine 825 and serine 827.

The protein belongs to the ZHX family. Homodimer (via homeobox domain 1). Heterodimer with ZHX1 (via homeobox domain 1). Heterodimer with ZHX3 (via homeobox domain 1). Heterodimerization with ZHX1 is not necessary for repressor activity. Interacts (via homeobox domain) with NFYA (via N-terminus). Interacts with EFNB1 intracellular domain peptide; the interaction enhances ZHX2 transcriptional repression activity.

Its subcellular location is the nucleus. Functionally, acts as a transcriptional repressor. Represses the promoter activity of the CDC25C gene stimulated by NFYA. May play a role in retinal development where it regulates the composition of bipolar cell populations, by promoting differentiation of bipolar OFF-type cells. In the brain, may promote maintenance and suppress differentiation of neural progenitor cells in the developing cortex. The protein is Zinc fingers and homeoboxes protein 2 (ZHX2) of Pongo abelii (Sumatran orangutan).